Reading from the N-terminus, the 78-residue chain is MLLEMDKIKITVDSKIGNVVTISYNLEKITIDVTPKKKKEKDVLLAQSVAVEEAKDVKVEEKNIIDIEDDDDMDVESA.

This sequence belongs to the orthopoxvirus OPG173 protein family.

The protein resides in the host cytoplasm. Plays a role in the inhibition of host protein synthesis. Specifically, inhibits the initiation of cap-dependent and cap-independent translation. In turn, affects the outcome of infection by decreasing recruitment of inflammatory leukocytes and reducing the memory CD8+ T-cell response. The sequence is that of Protein OPG173 (OPG173) from Vaccinia virus (strain Western Reserve) (VACV).